A 1100-amino-acid polypeptide reads, in one-letter code: DNA-directed RNA polymerase subunit beta (1100 aa).

Positions 1064–1100 are disordered; it reads YEEDKEVDLMADVNQRRTPSRPTYESMSVGDIDDDDD. Residues 1079–1089 are compositionally biased toward polar residues; sequence RRTPSRPTYES.

It belongs to the RNA polymerase beta chain family. In cyanobacteria the RNAP catalytic core is composed of 2 alpha, 1 beta, 1 beta', 1 gamma and 1 omega subunit. When a sigma factor is associated with the core the holoenzyme is formed, which can initiate transcription.

The enzyme catalyses RNA(n) + a ribonucleoside 5'-triphosphate = RNA(n+1) + diphosphate. In terms of biological role, DNA-dependent RNA polymerase catalyzes the transcription of DNA into RNA using the four ribonucleoside triphosphates as substrates. This Synechococcus elongatus (strain ATCC 33912 / PCC 7942 / FACHB-805) (Anacystis nidulans R2) protein is DNA-directed RNA polymerase subunit beta.